The following is a 126-amino-acid chain: Small ribosomal subunit protein uS13 (126 aa).

Positions 94–126 are disordered; it reads RGLPVHGQRTSTNARTRKGPRRAIAGKKKPGKK. Positions 108-126 are enriched in basic residues; the sequence is RTRKGPRRAIAGKKKPGKK.

This sequence belongs to the universal ribosomal protein uS13 family. Part of the 30S ribosomal subunit. Forms a loose heterodimer with protein S19. Forms two bridges to the 50S subunit in the 70S ribosome.

In terms of biological role, located at the top of the head of the 30S subunit, it contacts several helices of the 16S rRNA. In the 70S ribosome it contacts the 23S rRNA (bridge B1a) and protein L5 of the 50S subunit (bridge B1b), connecting the 2 subunits; these bridges are implicated in subunit movement. Contacts the tRNAs in the A and P-sites. In Streptomyces avermitilis (strain ATCC 31267 / DSM 46492 / JCM 5070 / NBRC 14893 / NCIMB 12804 / NRRL 8165 / MA-4680), this protein is Small ribosomal subunit protein uS13.